A 491-amino-acid chain; its full sequence is Probable glycine dehydrogenase (decarboxylating) subunit 2 (491 aa).

Position 273 is an N6-(pyridoxal phosphate)lysine (Lys-273).

The protein belongs to the GcvP family. C-terminal subunit subfamily. As to quaternary structure, the glycine cleavage system is composed of four proteins: P, T, L and H. In this organism, the P 'protein' is a heterodimer of two subunits. The cofactor is pyridoxal 5'-phosphate.

The catalysed reaction is N(6)-[(R)-lipoyl]-L-lysyl-[glycine-cleavage complex H protein] + glycine + H(+) = N(6)-[(R)-S(8)-aminomethyldihydrolipoyl]-L-lysyl-[glycine-cleavage complex H protein] + CO2. Functionally, the glycine cleavage system catalyzes the degradation of glycine. The P protein binds the alpha-amino group of glycine through its pyridoxal phosphate cofactor; CO(2) is released and the remaining methylamine moiety is then transferred to the lipoamide cofactor of the H protein. The polypeptide is Probable glycine dehydrogenase (decarboxylating) subunit 2 (Bacillus cytotoxicus (strain DSM 22905 / CIP 110041 / 391-98 / NVH 391-98)).